The chain runs to 307 residues: MSVKEHHSTVGAIAEAVAEAAHGDLPGTKGHHPISAVIGTAITGGRQNAGTKGYLTAYLKQLETNPLRTKMLTAGTLAGSQELLASWLAKDRNKNGNYFTARVPKMATYGALVSAPLGHFLIWILQKMFQNRKSLRAKILQILVSNLIVAPIQNSVYLVAMAIIAGAKTWKQVQATVRVGFWKVMKVSWLSSPLCLAFAQKFLPEAAWMPFFNLVSFFIGTYINYITKKKRLAALRRKHFGDGAHGDHRHDRERERDRERERHSSPPHGHGPSHGGRPINPTLGSHHGGGPVPPPQDYPSLGQNPRY.

3 consecutive transmembrane segments (helical) span residues methionine 106–leucine 125, asparagine 146–alanine 167, and alanine 207–threonine 227. The segment covering glycine 241–serine 264 has biased composition (basic and acidic residues). Positions glycine 241–tyrosine 307 are disordered. Residues proline 266–proline 278 are compositionally biased toward low complexity.

Belongs to the peroxisomal membrane protein PXMP2/4 family. As to quaternary structure, self-assembles into detergent-resistant oligomers and forms a complex with hex-1 assemblies.

Its subcellular location is the peroxisome membrane. It localises to the cell septum. Its function is as follows. Woronin sorting complex protein involved in both Woronin bodies (WB) formation and inherence. Localizes to large peroxisome membranes where it self-assembles into detergent-resistant oligomers that envelop hex-1 assemblies, producing asymmetrical nascent WBs. These structures are then delivered to the cell cortex, which permits partitioning of the nascent WB and WB inheritance. This chain is Woronin sorting complex protein, found in Neurospora crassa (strain ATCC 24698 / 74-OR23-1A / CBS 708.71 / DSM 1257 / FGSC 987).